The sequence spans 202 residues: Protein DCV1 (202 aa).

The signal sequence occupies residues 1-18 (MLNYKLILLFSSFLQLIS). 3 helical membrane-spanning segments follow: residues 91-107 (IGGL…LTFI), 137-155 (ILTL…LLCM), and 168-189 (LVWL…FLSF).

The protein localises to the membrane. This chain is Protein DCV1 (DCV1), found in Saccharomyces cerevisiae (strain ATCC 204508 / S288c) (Baker's yeast).